The following is a 336-amino-acid chain: HTH-type transcriptional repressor PurR (336 aa).

The HTH lacI-type domain maps to 2–56 (ATIKDVAKMAGVSTTTVSHVINKTRFVAKDTEEAVLSAIKQLNYSPSAVARSLKV). The H-T-H motif DNA-binding region spans 4 to 23 (IKDVAKMAGVSTTTVSHVIN). The DNA-binding element occupies 48–56 (SAVARSLKV). Hypoxanthine-binding residues include Tyr73, Lys188, Thr190, Phe219, and Asp273.

In terms of assembly, homodimer.

It functions in the pathway purine metabolism; purine nucleotide biosynthesis [regulation]. Functionally, is the main repressor of the genes involved in the de novo synthesis of purine nucleotides, regulating purB, purC, purEK, purF, purHD, purL, purMN and guaBA expression. PurR is allosterically activated to bind its cognate DNA by binding the purine corepressors, hypoxanthine or guanine, thereby effecting transcription repression. This chain is HTH-type transcriptional repressor PurR, found in Haemophilus influenzae (strain ATCC 51907 / DSM 11121 / KW20 / Rd).